Consider the following 741-residue polypeptide: Phosphoribosylformylglycinamidine synthase subunit PurL (741 aa).

H53 is an active-site residue. ATP contacts are provided by Y56 and K95. E97 contacts Mg(2+). Substrate-binding positions include S98–H101 and R120. The active-site Proton acceptor is the H99. Residue D121 coordinates Mg(2+). Q244 is a substrate binding site. Position 274 (D274) interacts with Mg(2+). E318–Q320 is a binding site for substrate. The ATP site is built by D501 and G538. Residue N539 coordinates Mg(2+). Residue S541 participates in substrate binding.

It belongs to the FGAMS family. In terms of assembly, monomer. Part of the FGAM synthase complex composed of 1 PurL, 1 PurQ and 2 PurS subunits.

It localises to the cytoplasm. It carries out the reaction N(2)-formyl-N(1)-(5-phospho-beta-D-ribosyl)glycinamide + L-glutamine + ATP + H2O = 2-formamido-N(1)-(5-O-phospho-beta-D-ribosyl)acetamidine + L-glutamate + ADP + phosphate + H(+). The protein operates within purine metabolism; IMP biosynthesis via de novo pathway; 5-amino-1-(5-phospho-D-ribosyl)imidazole from N(2)-formyl-N(1)-(5-phospho-D-ribosyl)glycinamide: step 1/2. Its function is as follows. Part of the phosphoribosylformylglycinamidine synthase complex involved in the purines biosynthetic pathway. Catalyzes the ATP-dependent conversion of formylglycinamide ribonucleotide (FGAR) and glutamine to yield formylglycinamidine ribonucleotide (FGAM) and glutamate. The FGAM synthase complex is composed of three subunits. PurQ produces an ammonia molecule by converting glutamine to glutamate. PurL transfers the ammonia molecule to FGAR to form FGAM in an ATP-dependent manner. PurS interacts with PurQ and PurL and is thought to assist in the transfer of the ammonia molecule from PurQ to PurL. In Latilactobacillus sakei subsp. sakei (strain 23K) (Lactobacillus sakei subsp. sakei), this protein is Phosphoribosylformylglycinamidine synthase subunit PurL.